Reading from the N-terminus, the 209-residue chain is Large ribosomal subunit protein uL3 (209 aa).

Residues 125-148 (RHGQSRGPMAHGSRYHRRPGSMGP) are disordered.

The protein belongs to the universal ribosomal protein uL3 family. Part of the 50S ribosomal subunit. Forms a cluster with proteins L14 and L19.

Its function is as follows. One of the primary rRNA binding proteins, it binds directly near the 3'-end of the 23S rRNA, where it nucleates assembly of the 50S subunit. This is Large ribosomal subunit protein uL3 from Lysinibacillus sphaericus (strain C3-41).